We begin with the raw amino-acid sequence, 1085 residues long: MANSPDAAFSSPALLRSGSVYEPLKSINLPRPDNETLWDKLDHYYRIVKSTMLMYQSPTTGLFPTKTCGGEEKSKVHESLYCAAGAWALALAYRRIDDDKGRTHELEHSAIKCMRGILYCYMRQADKVQQFKQDPRPTTCLHSVFSVHTGDELLSYEEYGHLQINAVSLFLLYLVEMISSGLQIIYNTDEVSFIQNLVFCVERVYRVPDFGVWERGSKYNNGSTELHSSSVGLAKAALEAINGFNLFGNQGCSWSVIFVDLDAHNRNRQTLCSLLPRESRSHNTDAALLPCISYPAFALDDEALFSQTLDKVIRKLKGKYGFKRFLRDGYRTPLEDPNRRYYKPAEIKLFDGIECEFPIFFLYMMIDGVFRGNLEQVKEYQDLLTPLLHQTTEGYPVVPKYYYVPADFVECEKRNPGSQKRFPSNCGRDGKLFLWGQALYIIAKLLADELISPKDIDPVQRFVPLQNQRNVSMRYSNQGPLENDLVVHVALVAESQRLQVFLNTYGIQTQTPQQVEPIQIWPQQELVKAYFHLGINEKLGLSGRPDRPIGCLGTSKIYRILGKTVVCYPIIFDLSDFYMSQDVLLLIDDIKNALQFIKQYWKMHGRPLFLVLIREDNIRGSRFNPILDMLAAFKKGIIGGVKVHVDRLQTLISGAVVEQLDFLRISDTEKLPEFKSFEELEFPKHSKVKRQSSTADAPEAQHEPGITITEWKNKSTHEILQKLNDCGCLAGQTILLGILLKREGPNFITMEGTVSDHIERVYRRAGSKKLWSVVRRAASLLNKVVDSLAPSITNVLVQGKQVTLGAFGHEEEVISNPLSPRVIKNIIYYKCNTHDEREAVIQQELVIHIGWIISNSPELFSGMLKIRIGWIIHAMEYELQVRGGDKPAVDLYQLSPSEVKQLLLDILQPQQSGRCWLNRRQIDGSLNRTPPEFYDRVWQILERTPNGIVVAGKHLPQQPTLSDMTMYEMNFSLLVEDMLGNIDQPKYRQIIVELLMVVSIVLERNPELEFQDKVDLDRLVKEAFHEFQKDESRLKEIEKQDDMTSFYNTPPLGKRGTCSYLTKVVMNSLLEGEVKPSNEDSCLVS.

Phosphoserine occurs at positions 10, 19, and 693. Calmodulin-binding regions lie at residues 760-787 and 912-943; these read RVYR…VVDS and SGRC…ILER. C1082 carries S-farnesyl cysteine lipidation.

The protein belongs to the phosphorylase b kinase regulatory chain family. In terms of assembly, hexadecamer of 4 heterotetramers, each composed of alpha, beta, gamma, and delta subunits. Alpha (PHKA1 or PHKA2) and beta (PHKB) are regulatory subunits, gamma (PHKG1 or PHKG2) is the catalytic subunit, and delta is calmodulin. In terms of processing, although the final Cys may be farnesylated, the terminal tripeptide is probably not removed, and the C-terminus is not methylated.

It localises to the cell membrane. The protein operates within glycan biosynthesis; glycogen metabolism. Its activity is regulated as follows. By phosphorylation of various serine residues. Its function is as follows. Phosphorylase b kinase catalyzes the phosphorylation of serine in certain substrates, including troponin I. The beta chain acts as a regulatory unit and modulates the activity of the holoenzyme in response to phosphorylation. This chain is Phosphorylase b kinase regulatory subunit beta (Phkb), found in Mus musculus (Mouse).